The following is a 478-amino-acid chain: Proline--tRNA ligase (478 aa).

This sequence belongs to the class-II aminoacyl-tRNA synthetase family. ProS type 3 subfamily. As to quaternary structure, homodimer.

It is found in the cytoplasm. The enzyme catalyses tRNA(Pro) + L-proline + ATP = L-prolyl-tRNA(Pro) + AMP + diphosphate. Its function is as follows. Catalyzes the attachment of proline to tRNA(Pro) in a two-step reaction: proline is first activated by ATP to form Pro-AMP and then transferred to the acceptor end of tRNA(Pro). In Clostridium botulinum (strain Kyoto / Type A2), this protein is Proline--tRNA ligase.